The primary structure comprises 548 residues: MAKELRFGDDARLQMLAGVNALADAVQVTMGPRGRNVVLEKSYGAPTVTKDGVSVAKEIEFEHRFMNMGAQMVKEVASKTSDTAGDGTTTATVLARSILVEGHKAVAAGMNPMDLKRGIDKAVLAVTKKLQAMSKPCKDSKAIAQVGTISANSDEAIGAIIAEAMEKVGKEGVITVEDGNGLENELYVVEGMQFDRGYISPYFINNQQNMSCELEHPFILLVDKKVSSIREMLSVLEGVAKSGRPLLIIAEDVEGEALATLVVNNMRGIVKVCAVKAPGFGDRRKAMLQDIAILTKGQVISEEIGKSLEGATLEDLGSAKRIVVTKENTTIIDGEGKATEINARIAQIRAQMEETTSDYDREKLQERVAKLAGGVAVIKVGAATEVEMKEKKARVEDALHATRAAVEEGIVAGGGVALIRAQKALDSLKGDNDDQNMGINILRRAIESPMRQIVTNAGYEASVVVNKVAEHKDNYGFNAATGEYGDMVEMGILDPTKVTRMALQNAASVASLMLTTECMVADLPKKEEGVGAGDMGGMGGMGGMGGMM.

ATP is bound by residues 29 to 32 (TMGP), Lys50, 86 to 90 (DGTTT), Gly414, 478 to 480 (NAA), and Asp494.

It belongs to the chaperonin (HSP60) family. In terms of assembly, forms a cylinder of 14 subunits composed of two heptameric rings stacked back-to-back. Interacts with the co-chaperonin GroES.

It is found in the cytoplasm. The enzyme catalyses ATP + H2O + a folded polypeptide = ADP + phosphate + an unfolded polypeptide.. Functionally, together with its co-chaperonin GroES, plays an essential role in assisting protein folding. The GroEL-GroES system forms a nano-cage that allows encapsulation of the non-native substrate proteins and provides a physical environment optimized to promote and accelerate protein folding. In terms of biological role, may play a protective role against the defense mechanisms generated by the infected macrophages. The protein is Chaperonin GroEL of Legionella pneumophila.